Reading from the N-terminus, the 303-residue chain is D-alanine--D-alanine ligase (303 aa).

Residues 103 to 293 (KTLFIKGGIP…FAQLCEKILE (191 aa)) enclose the ATP-grasp domain. 130 to 179 (PYVIKPSRQGSSIGIEFVYDIKELDQAIKKSTQYDHVVLAEALITGKELT) provides a ligand contact to ATP. Positions 247, 260, and 262 each coordinate Mg(2+).

Belongs to the D-alanine--D-alanine ligase family. Mg(2+) is required as a cofactor. The cofactor is Mn(2+).

It localises to the cytoplasm. The enzyme catalyses 2 D-alanine + ATP = D-alanyl-D-alanine + ADP + phosphate + H(+). It functions in the pathway cell wall biogenesis; peptidoglycan biosynthesis. Cell wall formation. The sequence is that of D-alanine--D-alanine ligase from Methylacidiphilum infernorum (isolate V4) (Methylokorus infernorum (strain V4)).